Here is a 266-residue protein sequence, read N- to C-terminus: UPF0354 protein lwe1624 (266 aa).

Belongs to the UPF0354 family.

The protein is UPF0354 protein lwe1624 of Listeria welshimeri serovar 6b (strain ATCC 35897 / DSM 20650 / CCUG 15529 / CIP 8149 / NCTC 11857 / SLCC 5334 / V8).